A 301-amino-acid chain; its full sequence is Ribosomal RNA small subunit methyltransferase H (301 aa).

S-adenosyl-L-methionine is bound by residues Gly-33 to His-35, Asp-52, Phe-79, Asp-100, and Gln-107.

The protein belongs to the methyltransferase superfamily. RsmH family.

The protein resides in the cytoplasm. It carries out the reaction cytidine(1402) in 16S rRNA + S-adenosyl-L-methionine = N(4)-methylcytidine(1402) in 16S rRNA + S-adenosyl-L-homocysteine + H(+). Functionally, specifically methylates the N4 position of cytidine in position 1402 (C1402) of 16S rRNA. The polypeptide is Ribosomal RNA small subunit methyltransferase H (Mycoplasmopsis synoviae (strain 53) (Mycoplasma synoviae)).